A 432-amino-acid polypeptide reads, in one-letter code: Adenylosuccinate synthetase (432 aa).

GTP-binding positions include G13 to K19 and G41 to T43. The Proton acceptor role is filled by D14. D14 and G41 together coordinate Mg(2+). IMP contacts are provided by residues D14–K17, N39–H42, T130, R144, Q225, T240, and R304. H42 (proton donor) is an active-site residue. A300–R306 serves as a coordination point for substrate. GTP-binding positions include R306, K332–D334, and S415–G417.

It belongs to the adenylosuccinate synthetase family. Homodimer. Requires Mg(2+) as cofactor.

The protein localises to the cytoplasm. The catalysed reaction is IMP + L-aspartate + GTP = N(6)-(1,2-dicarboxyethyl)-AMP + GDP + phosphate + 2 H(+). Its pathway is purine metabolism; AMP biosynthesis via de novo pathway; AMP from IMP: step 1/2. In terms of biological role, plays an important role in the de novo pathway of purine nucleotide biosynthesis. Catalyzes the first committed step in the biosynthesis of AMP from IMP. The protein is Adenylosuccinate synthetase of Shigella sonnei (strain Ss046).